A 513-amino-acid polypeptide reads, in one-letter code: OBERON-like protein (513 aa).

Residues 166-235 (NGFCNLCMCV…VFRCQACSXT (70 aa)) form a PHD-type zinc finger. Residues 372-469 (RELADKAREA…LYEKIKLQES (98 aa)) adopt a coiled-coil conformation. Residues 493-513 (YNGPPKADSQSNDCHPFRTNP) form a disordered region. A compositionally biased stretch (polar residues) spans 500 to 513 (DSQSNDCHPFRTNP).

As to quaternary structure, self-interacts and probably forms heteromers. Binds to VPg of pea seed borne mosaic virus (PSbMV), turnip mosaic virus (TuMV) and lettuce mosaic virus (LMV), but not with VPg of tobacco etch virus (TEV), cowpea mosaic virus (CPMV), tomato black ring virus (TBRV) and grapevine fan leaf virus (GFLV).

It is found in the nucleus. In terms of biological role, required for the maintenance and/or establishment of both the shoot and root meristems, probably by controlling the expression of the meristem genes and of genes required for auxin responses. Involved in the development of the basal pole and in auxin-mediated root and vascular development in the embryo. Confers sensitivity to turnip mosaic virus (TuMV) probably by promoting viral movement and multiplication via interaction with TuMV VPg. The polypeptide is OBERON-like protein (PVIP) (Pisum sativum (Garden pea)).